A 332-amino-acid polypeptide reads, in one-letter code: Mitoferrin-1 (332 aa).

3 Solcar repeats span residues 31 to 119, 129 to 213, and 220 to 314; these read ASLG…IKRS, NSHI…MQEH, and YRPE…FKYF. The next 6 helical transmembrane spans lie at 33-52, 94-113, 131-150, 188-207, 222-241, and 289-308; these read LGTHMTAGAVAGILEHTVMY, GLNITVLGAGPAHALYFACY, HIANGVAGSVATVLHDAVMN, SYSTQLTMNIPFQAVHFITY, PETHIISGAAAGAVSAAVTT, and GIQARVIYQMPSTAIAWSVY.

It belongs to the mitochondrial carrier (TC 2.A.29) family. As to expression, highly expressed in hematopoietic organs, Expressed in the intermediate cell mass (ICM), a tissue equivalent to the mammalian extraembryonic yolk-sac blood islands. Colocalizes with gata1.

The protein resides in the mitochondrion inner membrane. It carries out the reaction Fe(2+)(in) = Fe(2+)(out). Its function is as follows. Mitochondrial iron transporter that specifically mediates iron uptake in developing erythroid cells, thereby playing an essential role in heme biosynthesis. The chain is Mitoferrin-1 (slc25a37) from Danio rerio (Zebrafish).